The primary structure comprises 337 residues: Hsp90 co-chaperone Cdc37-like 1 (337 aa).

The segment covering 1 to 11 (MEQPWPPPGPW) has biased composition (pro residues). The tract at residues 1–43 (MEQPWPPPGPWSLPRAEGEAEEESDLDLSPGSPRCPQLPGGGT) is disordered. The interval 2–171 (EQPWPPPGPW…HEQKIRHFGM (170 aa)) is self-association. Phosphoserine is present on residues S32 and S88. Residues 84–122 (HNSESLDQEHAKAQTAISELRQREEEWRQKEEALVQRER) adopt a coiled-coil conformation. Residues 147 to 277 (KETEDEDKSK…SRVRLYSQSP (131 aa)) form a self-association and interaction with Hsp90 region. The interval 267 to 337 (KSRVRLYSQS…DDEPKMMDTV (71 aa)) is interaction with Hsp70. The tract at residues 278–337 (NFQPVTVQNHVPHSGVGSIGLLESLPQNPDYLQYSINTALCSLNSVVHKEDDEPKMMDTV) is required for interaction with STIP1.

Belongs to the CDC37 family. In terms of assembly, self-associates. Forms complexes with Hsp70 and Hsp90. Interacts with CDC37, FKBP4, PPID and STIP1.

Its subcellular location is the cytoplasm. Its function is as follows. Co-chaperone that binds to numerous proteins and promotes their interaction with Hsp70 and Hsp90. This chain is Hsp90 co-chaperone Cdc37-like 1 (CDC37L1), found in Bos taurus (Bovine).